The chain runs to 253 residues: ATP synthase subunit a (253 aa).

The next 6 membrane-spanning stretches (helical) occupy residues Ile-27–Phe-47, Phe-87–Val-107, Ile-117–Ile-137, Leu-146–Ile-166, Phe-196–Ala-216, and Leu-224–Leu-244.

This sequence belongs to the ATPase A chain family. As to quaternary structure, F-type ATPases have 2 components, CF(1) - the catalytic core - and CF(0) - the membrane proton channel. CF(1) has five subunits: alpha(3), beta(3), gamma(1), delta(1), epsilon(1). CF(0) has three main subunits: a(1), b(2) and c(9-12). The alpha and beta chains form an alternating ring which encloses part of the gamma chain. CF(1) is attached to CF(0) by a central stalk formed by the gamma and epsilon chains, while a peripheral stalk is formed by the delta and b chains.

It localises to the cell inner membrane. Key component of the proton channel; it plays a direct role in the translocation of protons across the membrane. The polypeptide is ATP synthase subunit a (Hyphomonas neptunium (strain ATCC 15444)).